The following is a 252-amino-acid chain: Chitooligosaccharide deacetylase (252 aa).

The Mg(2+) site is built by His-61 and His-125.

This sequence belongs to the YdjC deacetylase family. ChbG subfamily. Homodimer. Requires Mg(2+) as cofactor.

Its subcellular location is the cytoplasm. The catalysed reaction is N,N'-diacetylchitobiose + H2O = N-acetyl-beta-D-glucosaminyl-(1-&gt;4)-D-glucosamine + acetate. It catalyses the reaction diacetylchitobiose-6'-phosphate + H2O = N'-monoacetylchitobiose-6'-phosphate + acetate. It functions in the pathway glycan degradation; chitin degradation. Functionally, involved in the degradation of chitin. ChbG is essential for growth on the acetylated chitooligosaccharides chitobiose and chitotriose but is dispensable for growth on cellobiose and chitosan dimer, the deacetylated form of chitobiose. Deacetylation of chitobiose-6-P and chitotriose-6-P is necessary for both the activation of the chb promoter by the regulatory protein ChbR and the hydrolysis of phosphorylated beta-glucosides by the phospho-beta-glucosidase ChbF. Catalyzes the removal of only one acetyl group from chitobiose-6-P to yield monoacetylchitobiose-6-P, the inducer of ChbR and the substrate of ChbF. The protein is Chitooligosaccharide deacetylase of Escherichia coli O6:K15:H31 (strain 536 / UPEC).